We begin with the raw amino-acid sequence, 360 residues long: MLTWLAEFAVYFTPLNLFRYITFRTGGAIATALFFVFFFGPNIIKSLRIKQGKGQPIRSDGPQSHLLTKKGTPTMGGLMILSGLFVSTLLWANLSNHYVWVVLWVMLGYGAIGFYDDYLKVTKQTHNGFSGRGRLACEAGVALVACIAMMKLGTPHMTSLAFPAVNGYVVDLGLFFLIFGPFVIVASGNAVNLTDGLDGLAIVPVMIAAGTFGIIAYLVGNAIYSDYLRINFVPGAGELAVVSGAVIGAGLGFLWFNAPPAQIFMGDTGSLALGGLLGTIAVAIKHEMVLAIVGGLFALETLSVIVQVVSFKLTGKRVFKMAPIHHHFEQLGWSEPQVVVRFWIIAFVLALVGLSTLKLR.

10 helical membrane-spanning segments follow: residues 27–47 (GAIA…IKSL), 72–92 (TPTM…LLWA), 94–114 (LSNH…AIGF), 135–155 (LACE…LGTP), 167–187 (GYVV…IVAS), 199–219 (GLAI…AYLV), 236–256 (AGEL…FLWF), 263–283 (IFMG…IAVA), 289–309 (VLAI…VQVV), and 337–357 (QVVV…LSTL).

It belongs to the glycosyltransferase 4 family. MraY subfamily. Mg(2+) serves as cofactor.

The protein resides in the cell inner membrane. The enzyme catalyses UDP-N-acetyl-alpha-D-muramoyl-L-alanyl-gamma-D-glutamyl-meso-2,6-diaminopimeloyl-D-alanyl-D-alanine + di-trans,octa-cis-undecaprenyl phosphate = di-trans,octa-cis-undecaprenyl diphospho-N-acetyl-alpha-D-muramoyl-L-alanyl-D-glutamyl-meso-2,6-diaminopimeloyl-D-alanyl-D-alanine + UMP. Its pathway is cell wall biogenesis; peptidoglycan biosynthesis. Functionally, catalyzes the initial step of the lipid cycle reactions in the biosynthesis of the cell wall peptidoglycan: transfers peptidoglycan precursor phospho-MurNAc-pentapeptide from UDP-MurNAc-pentapeptide onto the lipid carrier undecaprenyl phosphate, yielding undecaprenyl-pyrophosphoryl-MurNAc-pentapeptide, known as lipid I. The polypeptide is Phospho-N-acetylmuramoyl-pentapeptide-transferase (Beijerinckia indica subsp. indica (strain ATCC 9039 / DSM 1715 / NCIMB 8712)).